The chain runs to 427 residues: Glutamate-1-semialdehyde 2,1-aminomutase (427 aa).

Position 265 is an N6-(pyridoxal phosphate)lysine (Lys-265).

The protein belongs to the class-III pyridoxal-phosphate-dependent aminotransferase family. HemL subfamily. As to quaternary structure, homodimer. Pyridoxal 5'-phosphate serves as cofactor.

Its subcellular location is the cytoplasm. It catalyses the reaction (S)-4-amino-5-oxopentanoate = 5-aminolevulinate. It functions in the pathway porphyrin-containing compound metabolism; protoporphyrin-IX biosynthesis; 5-aminolevulinate from L-glutamyl-tRNA(Glu): step 2/2. The protein is Glutamate-1-semialdehyde 2,1-aminomutase of Bordetella avium (strain 197N).